A 439-amino-acid chain; its full sequence is Xylose isomerase (439 aa).

Catalysis depends on residues His101 and Asp104. Residues Glu232, Glu268, His271, Asp296, Asp307, Asp309, and Asp339 each coordinate Mg(2+).

It belongs to the xylose isomerase family. Homotetramer. It depends on Mg(2+) as a cofactor.

Its subcellular location is the cytoplasm. It catalyses the reaction alpha-D-xylose = alpha-D-xylulofuranose. The sequence is that of Xylose isomerase from Yersinia pseudotuberculosis serotype O:1b (strain IP 31758).